A 253-amino-acid polypeptide reads, in one-letter code: Low affinity immunoglobulin gamma Fc region receptor III-B (253 aa).

Residues 1–20 form the signal peptide; it reads MGQPLPPVALLLLVSASSRA. Residues 21–207 are Extracellular-facing; that stretch reads ADVPKALVLL…VSSSVLPWHQ (187 aa). 2 Ig-like C2-type domains span residues 24 to 105 and 120 to 189; these read PKAL…LRVH and EGEP…VTIT. 2 cysteine pairs are disulfide-bonded: cysteine 47-cysteine 89 and cysteine 128-cysteine 172. N-linked (GlcNAc...) asparagine glycans are attached at residues asparagine 56, asparagine 63, asparagine 165, and asparagine 180. A helical transmembrane segment spans residues 208–226; that stretch reads IAFCLVMGLLLAADTGLYF. The Cytoplasmic segment spans residues 227–253; sequence SVQRDLRSSQRARKEHTLGWSLGSQDK.

As to quaternary structure, forms a heterooligomeric complex with ITAM-containing signaling subunits FCER1G. Interacts (via transmembrane domain) with signaling subunits; this interaction is a prerequisite for receptor complex expression on the cell surface and intracellular signal transduction. Binds the Fc region of antigen-complexed IgG.

The protein resides in the cell membrane. Its function is as follows. Receptor for the invariable Fc fragment of immunoglobulin gamma (IgG). Optimally activated upon binding of clustered antigen-IgG complexes displayed on cell surfaces, triggers lysis of antibody-coated cells, a process known as antibody-dependent cellular cytotoxicity (ADCC). Does not bind free monomeric IgG, thus avoiding inappropriate effector cell activation in the absence of antigenic trigger. Mediates IgG effector functions on natural killer (NK) cells. Binds antigen-IgG complexes generated upon infection and triggers NK cell-dependent cytokine production and degranulation to limit viral load and propagation. Fc-binding subunit that associates with FCER1G adapters to form functional signaling complexes. Following the engagement of antigen-IgG complexes, triggers phosphorylation of immunoreceptor tyrosine-based activation motif (ITAM)-containing adapters with subsequent activation of phosphatidylinositol 3-kinase signaling and sustained elevation of intracellular calcium that ultimately drive NK cell activation. Mediates enhanced ADCC in response to afucosylated IgGs. The sequence is that of Low affinity immunoglobulin gamma Fc region receptor III-B (FCGR3B) from Oryctolagus cuniculus (Rabbit).